Consider the following 711-residue polypeptide: Amino-acid racemase (711 aa).

Residues 1–14 (MTKNESYSGIDYFR) are Cytoplasmic-facing. Residues 15-35 (FIAALLIVAIHTSPLFSFSET) form a helical membrane-spanning segment. Topologically, residues 36–37 (GN) are extracellular. The helical transmembrane segment at 38-58 (FIFTRIVAPVAVPFFFMTSGF) threads the bilayer. Residues 59–78 (FLISRYTCNAEKLGAFIKKT) lie on the Cytoplasmic side of the membrane. A helical membrane pass occupies residues 79–99 (TLIYGVAILLYIPINVYNGYF). Residues 100–117 (KMDNLLPNIIKDIVFDGT) lie on the Extracellular side of the membrane. A helical transmembrane segment spans residues 118–138 (LYHLWYLPASIIGAAIAWYLV). At 139 to 146 (KKVHYRKA) the chain is on the cytoplasmic side. The helical transmembrane segment at 147–167 (FLIASILYIIGLFGDSYYGIV) threads the bilayer. Topologically, residues 168-188 (KSVSCLNVFYNLIFQLTDYTR) are extracellular. Residues 189–209 (NGIFFAPIFFVLGGYISDSPN) form a helical membrane-spanning segment. The Cytoplasmic segment spans residues 210–241 (RYRKKNYIRIYSLFCLMFGKTLTLQHFDIQKH). The chain crosses the membrane as a helical span at residues 242 to 262 (DSMYVLLLPSVWCLFNLLLHF). Over 263-306 (RGKRRTGLRTISLDQLYHSSVYDCCNTIVCAELLHLQSLLVENS) the chain is Extracellular. The helical transmembrane segment at 307–327 (LVHYIAVCFASVVLAVVITAL) threads the bilayer. Residues 328–711 (LSSLKPKKAK…EHRLNIIRRA (384 aa)) lie on the Cytoplasmic side of the membrane. The tract at residues 336–711 (AKHTADTDRA…EHRLNIIRRA (376 aa)) is racemase. K376 acts as the Proton acceptor in catalysis. Residue K376 is modified to N6-(pyridoxal phosphate)lysine. R470 serves as a coordination point for substrate. Residue Y602 is the Proton acceptor of the active site. M651 contacts substrate.

It in the N-terminal section; belongs to the acyltransferase 3 family. This sequence in the C-terminal section; belongs to the alanine racemase family. It depends on pyridoxal 5'-phosphate as a cofactor.

The protein localises to the cell membrane. This Enterococcus faecalis (Streptococcus faecalis) protein is Amino-acid racemase (vanTG).